The primary structure comprises 698 residues: Transferrin-binding protein B (698 aa).

The signal sequence occupies residues 1–20 (MNNPLVNQAAMVLPVFLLSA). Residue cysteine 21 is the site of N-palmitoyl cysteine attachment. Cysteine 21 carries the S-diacylglycerol cysteine lipid modification. Disordered regions lie at residues 33–58 (VDTE…QKDQ), 83–102 (IKLS…KNPS), 294–324 (FSGK…SLSG), 349–383 (GSAK…SENS), 428–479 (ESGK…GDAN), and 669–698 (TKNA…KPVQ). The segment covering 46-56 (DVSSEKPQAQK) has biased composition (polar residues). Residues 299 to 315 (EATDKPKNDGETKEHPF) show a composition bias toward basic and acidic residues. Residues 369 to 383 (AAASNGAAGTSSENS) show a composition bias toward low complexity. Polar residues predominate over residues 460 to 476 (QAGTAENGNPAASNTAG). Residues 671–686 (NATDASGNGNSASSAT) show a composition bias toward low complexity.

This sequence belongs to the TbpB family. In terms of assembly, binds only human holo-transferrin (TF), via the TF C-terminus. Forms a large complex with TbpA and TF. Interacts via its C-terminal domain with Slam1.

It is found in the cell outer membrane. The protein localises to the cell surface. Its function is as follows. Neisseria acquires iron by extracting it from serum transferrin (TF) in its human host. Acts as a TF receptor and is required for TF utilization. Involved in the initial capture of TF. Helps select only those TF molecules that can be used as an iron source and concentrates them on the cell surface, maintaining the iron-loaded status of the TF C-terminal lobe until its delivery to TbpA. The sequence is that of Transferrin-binding protein B from Neisseria meningitidis serogroup A / serotype 4A (strain DSM 15465 / Z2491).